Consider the following 202-residue polypeptide: Small ribosomal subunit protein uS4c (202 aa).

One can recognise an S4 RNA-binding domain in the interval 90 to 153 (MRLDNVIFRL…KSEAIISKNI (64 aa)).

This sequence belongs to the universal ribosomal protein uS4 family. Part of the 30S ribosomal subunit. Contacts protein S5. The interaction surface between S4 and S5 is involved in control of translational fidelity.

The protein resides in the plastid. It is found in the chloroplast. Its function is as follows. One of the primary rRNA binding proteins, it binds directly to 16S rRNA where it nucleates assembly of the body of the 30S subunit. Functionally, with S5 and S12 plays an important role in translational accuracy. This chain is Small ribosomal subunit protein uS4c (rps4), found in Cyathophorum bulbosum (Moss).